An 832-amino-acid polypeptide reads, in one-letter code: Dolichyl-phosphate-mannose--protein mannosyltransferase 6 (832 aa).

The tract at residues 1–44 is disordered; the sequence is MATGYSTGVSPFDLDENNHNDSIHHRHQNHHSQSHDSSGERDDT. N-linked (GlcNAc...) asparagine glycosylation is found at N20 and N59. Helical transmembrane passes span 135-155, 175-194, 206-227, 232-252, 266-286, 293-311, and 327-347; these read FYFD…GYLA, YVFM…PLAY, TCWL…SKFI, MLLF…TLAI, LEIK…SVKW, ALVG…YQTF, and LIHW…IYVA. N-linked (GlcNAc...) asparagine glycosylation is present at N357. Positions 383 to 437 constitute an MIR 1 domain; that stretch reads PRSVAFGSLVTIRSQGLSPNLIHSHPHNYPQGSQEQQVTTYGFKDDNNEFLFEFG. The N-linked (GlcNAc...) asparagine glycan is linked to N453. MIR domains lie at 466-522 and 537-595; these read HVII…IEIQ and PSEI…IEKH. Helical transmembrane passes span 676-696, 723-743, 755-775, and 787-807; these read ITWI…VVGI, LLAA…VPFI, VPAL…ILNL, and IFKV…FWYF.

The protein belongs to the glycosyltransferase 39 family.

It localises to the endoplasmic reticulum membrane. The enzyme catalyses a di-trans,poly-cis-dolichyl beta-D-mannosyl phosphate + L-seryl-[protein] = 3-O-(alpha-D-mannosyl)-L-seryl-[protein] + a di-trans,poly-cis-dolichyl phosphate + H(+). The catalysed reaction is a di-trans,poly-cis-dolichyl beta-D-mannosyl phosphate + L-threonyl-[protein] = 3-O-(alpha-D-mannosyl)-L-threonyl-[protein] + a di-trans,poly-cis-dolichyl phosphate + H(+). It participates in protein modification; protein glycosylation. Protein mannosyltransferase (PMT) involved in hyphal morphogenesis and drug sensitivity. Transfers mannose from Dol-P-mannose to Ser or Thr residues on proteins. PMT1, PMT2 and PMT4 account for most of the protein-O-glycosylation activity, while PMT5 and PMT6 may specifically modulate a much narrower spectrum of target proteins. Required for biofilm formation and virulence. This chain is Dolichyl-phosphate-mannose--protein mannosyltransferase 6 (PMT6), found in Candida albicans (strain SC5314 / ATCC MYA-2876) (Yeast).